We begin with the raw amino-acid sequence, 289 residues long: Diaminopimelate epimerase (289 aa).

Substrate is bound by residues N11 and N78. Catalysis depends on C87, which acts as the Proton donor. Residues 88-89 (GN), N163, N199, and 217-218 (ER) each bind substrate. C226 acts as the Proton acceptor in catalysis. Residue 227–228 (GT) participates in substrate binding.

Belongs to the diaminopimelate epimerase family. Homodimer.

It is found in the cytoplasm. The catalysed reaction is (2S,6S)-2,6-diaminopimelate = meso-2,6-diaminopimelate. The protein operates within amino-acid biosynthesis; L-lysine biosynthesis via DAP pathway; DL-2,6-diaminopimelate from LL-2,6-diaminopimelate: step 1/1. Its function is as follows. Catalyzes the stereoinversion of LL-2,6-diaminopimelate (L,L-DAP) to meso-diaminopimelate (meso-DAP), a precursor of L-lysine and an essential component of the bacterial peptidoglycan. This chain is Diaminopimelate epimerase, found in Mycobacterium bovis (strain ATCC BAA-935 / AF2122/97).